The sequence spans 463 residues: Lactaldehyde dehydrogenase (463 aa).

Residue 220-225 (GSSKVG) participates in NAD(+) binding. Residues Glu-240 and Cys-274 contribute to the active site.

Belongs to the aldehyde dehydrogenase family. As to quaternary structure, homotetramer.

The enzyme catalyses (S)-lactaldehyde + NAD(+) + H2O = (S)-lactate + NADH + 2 H(+). Its pathway is cofactor biosynthesis; coenzyme F420 biosynthesis. Functionally, involved in F420 biosynthesis through the oxidation of lactaldehyde to lactate. The substrate preference order is propionaldehyde &gt; DL-lactaldehyde, DL-glyceraldehyde &gt; crotonaldehyde &gt; glycolaldehyde &gt; acetaldehyde, acrolein &gt; formaldehyde. No activity was observed towards methylglyoxal or glyceraldehyde-3-phosphate. Has a preference for NAD over NADP. The sequence is that of Lactaldehyde dehydrogenase from Methanocaldococcus jannaschii (strain ATCC 43067 / DSM 2661 / JAL-1 / JCM 10045 / NBRC 100440) (Methanococcus jannaschii).